The chain runs to 267 residues: MEDAVTMDTAFEDKPLVVAGRTFTSRLIIGTGKYKTYAQNAQALEASGAEMITVAIRRVNLSNPDEPRLVDFISPDDYTFLPNTAGCFTGEDAVRTLRLAREAGGWNLVKLEVLSDPKHLYPDMAETLRAAELLIKDGFDVMVYCSDDPVYARKLEEIGCCAIMPLGAPIGSGLGIQNPVNIRLIIEQTKVPVIVDAGVGTASDATVAMELGCDGVLMNTAIAEAKDPIRMARAMRHAVIAGRESYLAGRMPKKRYADPSSPLSGLI.

K110 functions as the Schiff-base intermediate with DXP in the catalytic mechanism. Residues G171, 197-198 (AG), and 219-220 (NT) each bind 1-deoxy-D-xylulose 5-phosphate.

The protein belongs to the ThiG family. As to quaternary structure, homotetramer. Forms heterodimers with either ThiH or ThiS.

It is found in the cytoplasm. It catalyses the reaction [ThiS sulfur-carrier protein]-C-terminal-Gly-aminoethanethioate + 2-iminoacetate + 1-deoxy-D-xylulose 5-phosphate = [ThiS sulfur-carrier protein]-C-terminal Gly-Gly + 2-[(2R,5Z)-2-carboxy-4-methylthiazol-5(2H)-ylidene]ethyl phosphate + 2 H2O + H(+). The protein operates within cofactor biosynthesis; thiamine diphosphate biosynthesis. Catalyzes the rearrangement of 1-deoxy-D-xylulose 5-phosphate (DXP) to produce the thiazole phosphate moiety of thiamine. Sulfur is provided by the thiocarboxylate moiety of the carrier protein ThiS. In vitro, sulfur can be provided by H(2)S. This chain is Thiazole synthase, found in Maricaulis maris (strain MCS10) (Caulobacter maris).